Reading from the N-terminus, the 191-residue chain is Outer membrane lipoprotein DolP (191 aa).

Positions 1–18 are cleaved as a signal peptide; sequence MKALSPIAVLISALLLQG. Cys19 is lipidated: N-palmitoyl cysteine. Cys19 is lipidated: S-diacylglycerol cysteine. BON domains follow at residues 46 to 115 and 124 to 191; these read DDGT…RQGQ and NDTW…TFIK.

It belongs to the lipoprotein DolP family.

It is found in the cell outer membrane. Its function is as follows. Plays an important role in maintaining outer membrane integrity. The polypeptide is Outer membrane lipoprotein DolP (Escherichia coli O157:H7).